The sequence spans 348 residues: Putative S-adenosyl-L-methionine-dependent methyltransferase MRA_3439 (348 aa).

S-adenosyl-L-methionine contacts are provided by residues aspartate 171 and 200-201 (DL).

This sequence belongs to the UPF0677 family.

Its function is as follows. Exhibits S-adenosyl-L-methionine-dependent methyltransferase activity. This chain is Putative S-adenosyl-L-methionine-dependent methyltransferase MRA_3439, found in Mycobacterium tuberculosis (strain ATCC 25177 / H37Ra).